The sequence spans 210 residues: Cytidylate kinase (210 aa).

9–17 (GPAAAGKGT) provides a ligand contact to ATP.

This sequence belongs to the cytidylate kinase family. Type 1 subfamily.

It localises to the cytoplasm. The enzyme catalyses CMP + ATP = CDP + ADP. The catalysed reaction is dCMP + ATP = dCDP + ADP. The protein is Cytidylate kinase of Agrobacterium fabrum (strain C58 / ATCC 33970) (Agrobacterium tumefaciens (strain C58)).